We begin with the raw amino-acid sequence, 343 residues long: Cytoplasmic tRNA 2-thiolation protein 1 (343 aa).

It belongs to the TtcA family. CTU1/NCS6/ATPBD3 subfamily.

Its subcellular location is the cytoplasm. It participates in tRNA modification; 5-methoxycarbonylmethyl-2-thiouridine-tRNA biosynthesis. Its function is as follows. Plays a central role in 2-thiolation of mcm(5)S(2)U at tRNA wobble positions of tRNA(Lys), tRNA(Glu) and tRNA(Gln). Directly binds tRNAs and probably acts by catalyzing adenylation of tRNAs, an intermediate required for 2-thiolation. It is unclear whether it acts as a sulfurtransferase that transfers sulfur from thiocarboxylated URM1 onto the uridine of tRNAs at wobble position. The chain is Cytoplasmic tRNA 2-thiolation protein 1 from Drosophila pseudoobscura pseudoobscura (Fruit fly).